Consider the following 148-residue polypeptide: HTH-type transcriptional regulator Rv2324 (148 aa).

Positions 4 to 65 (LDDTDERILA…VVDRNALGWN (62 aa)) constitute an HTH asnC-type domain. The H-T-H motif DNA-binding region spans 23–42 (FAEIGHKVSLSAPAVKRRVD).

As to quaternary structure, homodimer. Forms oligomers.

The DNA-binding activity of Rv2324 is modulated by interaction of Rv2324 with amino acids. Aspartate is the only effector amino acid that completely abolishes DNA binding. The majority of amino acids induce a dimer-tetramer or dimer-hexamer oligomeric transition. In response to amino-acid binding, adopts an open quaternary association, which is a part of the functional requirement to bind to non-symmetrically distributed target DNA binding sites. Functionally, transcriptional regulator involved in growth, DNA replication and damage control. Plays a crucial role in regulating survival and growth of M.tuberculosis. Could function as a global regulator in both the latent/persistent and active phases of growth. Binds to its own promoter region and to promoters of multiple metabolic genes, such as serB2, lat, ald and roc operon. In vitro, interacts with intrinsically curved and non-curved DNA molecules, and with both supercoiled and linear DNA, with higher affinity for supercoiled DNA. Binds to DNA recombination, replication and repair intermediates. The chain is HTH-type transcriptional regulator Rv2324 from Mycobacterium tuberculosis (strain ATCC 25618 / H37Rv).